The following is a 228-amino-acid chain: Octanoyltransferase (228 aa).

One can recognise a BPL/LPL catalytic domain in the interval 37–217 (AGGPDTLLLL…AVCDALDGRL (181 aa)). Substrate contacts are provided by residues 75 to 82 (RGGKITWH), 147 to 149 (AIG), and 160 to 162 (GFA). The active-site Acyl-thioester intermediate is Cys178.

The protein belongs to the LipB family.

It is found in the cytoplasm. The catalysed reaction is octanoyl-[ACP] + L-lysyl-[protein] = N(6)-octanoyl-L-lysyl-[protein] + holo-[ACP] + H(+). It functions in the pathway protein modification; protein lipoylation via endogenous pathway; protein N(6)-(lipoyl)lysine from octanoyl-[acyl-carrier-protein]: step 1/2. In terms of biological role, catalyzes the transfer of endogenously produced octanoic acid from octanoyl-acyl-carrier-protein onto the lipoyl domains of lipoate-dependent enzymes. Lipoyl-ACP can also act as a substrate although octanoyl-ACP is likely to be the physiological substrate. This chain is Octanoyltransferase, found in Mycolicibacterium smegmatis (strain ATCC 700084 / mc(2)155) (Mycobacterium smegmatis).